The sequence spans 476 residues: tRNA (cytosine(72)-C(5))-methyltransferase NSUN6 (476 aa).

The PUA domain maps to 111–203 (QGEVIVGAQC…IGIRMTEPIY (93 aa)). S-adenosyl-L-methionine contacts are provided by residues 242–248 (CAAPGGK), Asp266, Asp293, and Asp323. Residue Cys373 is the Nucleophile of the active site. Lys419 bears the N6-acetyllysine mark.

This sequence belongs to the class I-like SAM-binding methyltransferase superfamily. RsmB/NOP family.

It is found in the cytoplasm. It carries out the reaction cytidine(72) in tRNA(Thr) + S-adenosyl-L-methionine = 5-methylcytidine(72) in tRNA(Thr) + S-adenosyl-L-homocysteine + H(+). The enzyme catalyses cytidine(72) in tRNA(Cys) + S-adenosyl-L-methionine = 5-methylcytidine(72) in tRNA(Cys) + S-adenosyl-L-homocysteine + H(+). S-adenosyl-L-methionine-dependent methyltransferase that specifically methylates the C5 position of cytosine 72 in tRNA(Thr)(TGT) and tRNA(Cys)(GCA). In vitro also methylates tRNA(Thr)(AGT). Methylation requires, in the acceptor stem region, the presence of the 3'-CCA terminus, the target site C72, the discriminator base U73, and the second and third base pairs (2:71 and 3:70) in the tRNA substrates. In Mus musculus (Mouse), this protein is tRNA (cytosine(72)-C(5))-methyltransferase NSUN6.